A 325-amino-acid chain; its full sequence is Beta-ketoacyl-[acyl-carrier-protein] synthase III (325 aa).

Residues Cys-112 and His-250 contribute to the active site. An ACP-binding region spans residues 251–255 (QANIR). The active site involves Asn-280.

Belongs to the thiolase-like superfamily. FabH family. Homodimer.

The protein resides in the cytoplasm. It catalyses the reaction malonyl-[ACP] + acetyl-CoA + H(+) = 3-oxobutanoyl-[ACP] + CO2 + CoA. The protein operates within lipid metabolism; fatty acid biosynthesis. Functionally, catalyzes the condensation reaction of fatty acid synthesis by the addition to an acyl acceptor of two carbons from malonyl-ACP. Catalyzes the first condensation reaction which initiates fatty acid synthesis and may therefore play a role in governing the total rate of fatty acid production. Possesses both acetoacetyl-ACP synthase and acetyl transacylase activities. Its substrate specificity determines the biosynthesis of branched-chain and/or straight-chain of fatty acids. In Streptococcus mutans serotype c (strain ATCC 700610 / UA159), this protein is Beta-ketoacyl-[acyl-carrier-protein] synthase III.